The primary structure comprises 548 residues: MAKIIAFDEEARRGLEKGLNTLADAVKVTLGPKGRNVVLEKAWGAPTITNDGVTIAREIELEDPYEKIGAELVKEVAKKTDDVAGDGTTTATVLAQALVREGLRNVAAGSNPMGIKRGIEKAVAQVTEKLLEAAKEVETEEQIAATAGISAADPAIGAQIAKAMYAVGGGKLNKDSVITVEESNTFGVELEVTEGMRFDKGYISGYFATDMERLEAVLEDPYILLVSGKISNIKDLLPLLEKVMQSGKPLLIISEDVEGEALSTLVVNKIRGTFKSVAVKAPGFGDRRKAQLQDIAVLTGGQVISEEVGLSLETADLPLLGQARKVVVTKDDTTIVDGAGSEAQIEGRVNQIRVEIENSDSDYDREKLNERLAKLAGGVAVLKVGAATEVELKERKHRIEDAVRNAKAAVEEGIVAGGGVALLQAAHVLDNDLELSGDEATGVRIVREALTAPLKQIAANAGLEPGVVADKVSQLPQGEGLNAANGEYVDLMAAGINDPVKVTRSALQNAASIAALFLTTEAVVADKPQPAGAAGMPGADEMGGMGGF.

ATP-binding positions include 29-32 (TLGP), 86-90 (DGTTT), G418, 482-484 (NAA), and D498.

The protein belongs to the chaperonin (HSP60) family. In terms of assembly, forms a cylinder of 14 subunits composed of two heptameric rings stacked back-to-back. Interacts with the co-chaperonin GroES.

It is found in the cytoplasm. The catalysed reaction is ATP + H2O + a folded polypeptide = ADP + phosphate + an unfolded polypeptide.. Functionally, together with its co-chaperonin GroES, plays an essential role in assisting protein folding. The GroEL-GroES system forms a nano-cage that allows encapsulation of the non-native substrate proteins and provides a physical environment optimized to promote and accelerate protein folding. This is Chaperonin GroEL 2 from Corynebacterium glutamicum (strain ATCC 13032 / DSM 20300 / JCM 1318 / BCRC 11384 / CCUG 27702 / LMG 3730 / NBRC 12168 / NCIMB 10025 / NRRL B-2784 / 534).